Reading from the N-terminus, the 487-residue chain is (S)-N-methylcoclaurine 3'-hydroxylase isozyme 1 (487 aa).

A helical membrane pass occupies residues 4-24 (TVALIAVIISSILYLLFGGSG). Cys429 is a binding site for heme.

It belongs to the cytochrome P450 family. The cofactor is heme.

The protein resides in the endoplasmic reticulum membrane. It localises to the microsome membrane. It catalyses the reaction (S)-N-methylcoclaurine + reduced [NADPH--hemoprotein reductase] + O2 = (S)-3'-hydroxy-N-methylcoclaurine + oxidized [NADPH--hemoprotein reductase] + H2O + H(+). It functions in the pathway alkaloid biosynthesis; (S)-reticuline biosynthesis; (S)-reticuline from (S)-norcoclaurine: step 3/4. Its function is as follows. 3'-hydroxylation of (S)-N-methylcoclaurine. The sequence is that of (S)-N-methylcoclaurine 3'-hydroxylase isozyme 1 (CYP80B1) from Eschscholzia californica (California poppy).